The chain runs to 277 residues: Elongation factor Ts (277 aa).

Residues 81–84 (TDFV) form an involved in Mg(2+) ion dislocation from EF-Tu region.

It belongs to the EF-Ts family.

The protein resides in the cytoplasm. Associates with the EF-Tu.GDP complex and induces the exchange of GDP to GTP. It remains bound to the aminoacyl-tRNA.EF-Tu.GTP complex up to the GTP hydrolysis stage on the ribosome. The polypeptide is Elongation factor Ts (Amoebophilus asiaticus (strain 5a2)).